The following is a 1189-amino-acid chain: Lysine-specific demethylase hairless (1189 aa).

Disordered regions lie at residues Met1 to Pro40, His236 to Ala257, Glu349 to Thr377, Ala414 to Pro480, and Gly505 to Thr552. The span at Arg239–Glu254 shows a compositional bias: basic and acidic residues. The segment covering Lys457–Gly469 has biased composition (basic and acidic residues). Residues Leu566–Leu570 carry the LXXLL motif 1 motif. The C6-type zinc finger occupies Cys600–Cys625. The segment at Gly702 to Arg750 is disordered. Over residues Asp725–Thr736 the composition is skewed to basic and acidic residues. Residues Leu758–Leu762 carry the LXXLL motif 2 motif. Residues Asp946–Pro1157 enclose the JmjC domain. Residues Cys1007, Glu1009, and His1125 each coordinate Fe cation.

Requires Fe(2+) as cofactor. As to expression, strongest expression of isoforms 1 and 2 is seen in the small intestine, weaker expression in brain and colon, and trace expression is found in liver, pancreas, spleen, thymus, stomach, salivary gland, appendix and trachea. Isoform 1 is always the most abundant. Isoform 1 is exclusively expressed at low levels in kidney and testis. Isoform 2 is exclusively expressed at high levels in the skin.

The protein localises to the nucleus. The enzyme catalyses N(6),N(6)-dimethyl-L-lysyl(9)-[histone H3] + 2 2-oxoglutarate + 2 O2 = L-lysyl(9)-[histone H3] + 2 formaldehyde + 2 succinate + 2 CO2. In terms of biological role, histone demethylase that specifically demethylates both mono- and dimethylated 'Lys-9' of histone H3. May act as a transcription regulator controlling hair biology (via targeting of collagens), neural activity, and cell cycle. This chain is Lysine-specific demethylase hairless (HR), found in Homo sapiens (Human).